A 466-amino-acid polypeptide reads, in one-letter code: Asparagine--tRNA ligase (466 aa).

This sequence belongs to the class-II aminoacyl-tRNA synthetase family. As to quaternary structure, homodimer.

Its subcellular location is the cytoplasm. It catalyses the reaction tRNA(Asn) + L-asparagine + ATP = L-asparaginyl-tRNA(Asn) + AMP + diphosphate + H(+). This Shewanella baltica (strain OS195) protein is Asparagine--tRNA ligase.